Consider the following 104-residue polypeptide: MAEPMISIEVAYAAVDRQALIRVQVPQGSTLRAALQASAIGQQFPELDLAACPVGIFGKQVSDPEQHVIQAGDRIEVYRPLLADPKEVRRLRAAKAAEARKRES.

It belongs to the UPF0125 (RnfH) family.

The polypeptide is Protein RnfH (Pseudomonas fluorescens (strain ATCC BAA-477 / NRRL B-23932 / Pf-5)).